The primary structure comprises 208 residues: ATP-dependent dethiobiotin synthetase BioD (208 aa).

An ATP-binding site is contributed by 11 to 16; it reads EVGKTF. Threonine 15 is a binding site for Mg(2+). Residue lysine 31 is part of the active site. Serine 35 is a substrate binding site. Residues aspartate 42, 95 to 98, and 155 to 156 each bind ATP; these read ETSG and NQ. Residues aspartate 42 and glutamate 95 each coordinate Mg(2+).

Belongs to the dethiobiotin synthetase family. As to quaternary structure, homodimer. Requires Mg(2+) as cofactor.

It localises to the cytoplasm. The catalysed reaction is (7R,8S)-7,8-diammoniononanoate + CO2 + ATP = (4R,5S)-dethiobiotin + ADP + phosphate + 3 H(+). It participates in cofactor biosynthesis; biotin biosynthesis; biotin from 7,8-diaminononanoate: step 1/2. Catalyzes a mechanistically unusual reaction, the ATP-dependent insertion of CO2 between the N7 and N8 nitrogen atoms of 7,8-diaminopelargonic acid (DAPA, also called 7,8-diammoniononanoate) to form a ureido ring. This is ATP-dependent dethiobiotin synthetase BioD from Chlamydia felis (strain Fe/C-56) (Chlamydophila felis).